The chain runs to 121 residues: Phosphoribosyl-ATP pyrophosphatase (121 aa).

This sequence belongs to the PRA-PH family.

It is found in the cytoplasm. The enzyme catalyses 1-(5-phospho-beta-D-ribosyl)-ATP + H2O = 1-(5-phospho-beta-D-ribosyl)-5'-AMP + diphosphate + H(+). Its pathway is amino-acid biosynthesis; L-histidine biosynthesis; L-histidine from 5-phospho-alpha-D-ribose 1-diphosphate: step 2/9. This is Phosphoribosyl-ATP pyrophosphatase from Nitrosospira multiformis (strain ATCC 25196 / NCIMB 11849 / C 71).